An 865-amino-acid polypeptide reads, in one-letter code: LINE-1 type transposase domain-containing protein 1 (865 aa).

Position 2 is an N-acetylserine (Ser-2). At Ser-2 the chain carries Phosphoserine. The residue at position 149 (Thr-149) is a Phosphothreonine. Ser-154 is subject to Phosphoserine. The tract at residues 370–508 is disordered; that stretch reads EMKNLETQEE…EKKASRRQKE (139 aa). 2 stretches are compositionally biased toward acidic residues: residues 376–440 and 472–483; these read TQEE…EQTS and SVEDSESEEEEE. Phosphoserine occurs at positions 472, 476, and 478. Positions 498 to 508 are enriched in basic and acidic residues; sequence TEKKASRRQKE. Phosphoserine occurs at positions 518, 561, and 573. Residues 590 to 608 are compositionally biased toward basic and acidic residues; sequence EEKKHRTLHTEELTSKEAD. Residues 590-612 are disordered; sequence EEKKHRTLHTEELTSKEADLTEE. 3 positions are modified to phosphoserine: Ser-640, Ser-648, and Ser-665. The stretch at 642 to 684 forms a coiled coil; sequence VLEIENSVDDLSSRMDILEERIDSLEDQIEEFSKDTMQMTKQI.

Belongs to the transposase 22 family.

The polypeptide is LINE-1 type transposase domain-containing protein 1 (L1TD1) (Homo sapiens (Human)).